A 75-amino-acid polypeptide reads, in one-letter code: Putative DNA-directed RNA polymerase subunit omega (75 aa).

Belongs to the RNA polymerase subunit omega family.

Its subcellular location is the plastid. The protein localises to the chloroplast. The enzyme catalyses RNA(n) + a ribonucleoside 5'-triphosphate = RNA(n+1) + diphosphate. In terms of biological role, may be involved in RNA polymerase activity. This is Putative DNA-directed RNA polymerase subunit omega from Pyropia yezoensis (Susabi-nori).